Reading from the N-terminus, the 90-residue chain is U7-theraphotoxin-Hhn1a 5 (90 aa).

Residues M1–S19 form the signal peptide. A propeptide spanning residues F20–E50 is cleaved from the precursor. 3 disulfide bridges follow: C51/C65, C58/C70, and C64/C81.

The protein belongs to the neurotoxin 10 (Hwtx-1) family. 13 (Hntx-13) subfamily. As to expression, expressed by the venom gland.

It is found in the secreted. Functionally, ion channel inhibitor. The polypeptide is U7-theraphotoxin-Hhn1a 5 (Cyriopagopus hainanus (Chinese bird spider)).